The sequence spans 80 residues: Large ribosomal subunit protein eL20 (80 aa).

It belongs to the eukaryotic ribosomal protein eL20 family. Part of the 50S ribosomal subunit. Binds 23S rRNA.

The polypeptide is Large ribosomal subunit protein eL20 (Methanopyrus kandleri (strain AV19 / DSM 6324 / JCM 9639 / NBRC 100938)).